We begin with the raw amino-acid sequence, 243 residues long: Ribosomal RNA small subunit methyltransferase J (243 aa).

S-adenosyl-L-methionine contacts are provided by residues 112 to 113 and D164; that span reads ER.

Belongs to the methyltransferase superfamily. RsmJ family.

It is found in the cytoplasm. The enzyme catalyses guanosine(1516) in 16S rRNA + S-adenosyl-L-methionine = N(2)-methylguanosine(1516) in 16S rRNA + S-adenosyl-L-homocysteine + H(+). In terms of biological role, specifically methylates the guanosine in position 1516 of 16S rRNA. In Legionella pneumophila (strain Lens), this protein is Ribosomal RNA small subunit methyltransferase J.